A 471-amino-acid polypeptide reads, in one-letter code: GDP-mannose transporter (471 aa).

Over residues 1–13 (MSSGSRSFFTPQE) the composition is skewed to polar residues. The disordered stretch occupies residues 1–52 (MSSGSRSFFTPQETRLELPQGAAHQTPDITRPASPSENDRAPFLNGGPSDAR). Residues 1-70 (MSSGSRSFFT…ALRNDSEKPA (70 aa)) lie on the Cytoplasmic side of the membrane. A helical transmembrane segment spans residues 71–91 (VGIMALAPILCYCAASITMTV). Topologically, residues 92–101 (VNKFTVSGRG) are lumenal. The helical transmembrane segment at 102-122 (FNMNLLVLLIQSTVGVTCVWI) threads the bilayer. Topologically, residues 123–139 (AERAGLIQLRGLNAKDA) are cytoplasmic. A helical membrane pass occupies residues 140–160 (WNWMPLSIMLVFVIWTGSKAL). At 161–166 (QYLNIS) the chain is on the lumenal side. An N-linked (GlcNAc...) asparagine glycan is attached at Asn-164. Residues 167–187 (VYTIFKNLTIILIAYGEVMWF) form a helical membrane-spanning segment. Residues 188–193 (GGRVTR) lie on the Cytoplasmic side of the membrane. A helical membrane pass occupies residues 194–214 (IVLCSFLFMVLSSVIAAWSDI). Topologically, residues 215-279 (SNVFAIGNLS…DVIEGFQGYG (65 aa)) are lumenal. Asn-222 is a glycosylation site (N-linked (GlcNAc...) asparagine). A helical transmembrane segment spans residues 280–300 (LLSSGYVWMALNCICSATYVL). Residues 301 to 315 (LMRKRIKVTGFKDWD) are Cytoplasmic-facing. Residues 316–336 (TMFYNNFLSIPVLLLMSFLVE) form a helical membrane-spanning segment. The Lumenal segment spans residues 337 to 354 (DWSYANLHKNFPDDKQTK). A helical transmembrane segment spans residues 355 to 375 (LISAIVFSGACAILISYTTAW). At 376-383 (CIRATSST) the chain is on the cytoplasmic side. Residues 384-404 (TYSMVGALNKLPVALSGMVFF) form a helical membrane-spanning segment. Residues 405–408 (HDPP) lie on the Lumenal side of the membrane. The helical transmembrane segment at 409 to 429 (VTFSSVSAIAVGFFAGLVYAF) threads the bilayer. Over 430-471 (GKNKQAEAAKLGGHASANGSSSMSGSKDGSSLPMHTFNDRKD) the chain is Cytoplasmic. A compositionally biased stretch (low complexity) spans 442–460 (GHASANGSSSMSGSKDGSS). The disordered stretch occupies residues 442 to 471 (GHASANGSSSMSGSKDGSSLPMHTFNDRKD).

The protein belongs to the TPT transporter family. SLC35D subfamily. As to quaternary structure, homooligomer.

It localises to the golgi apparatus membrane. Its subcellular location is the cytoplasmic vesicle membrane. The protein localises to the endoplasmic reticulum membrane. Functionally, involved in the import of GDP-mannose from the cytoplasm into the Golgi lumen. This chain is GDP-mannose transporter (VRG4), found in Mycosarcoma maydis (Corn smut fungus).